A 184-amino-acid polypeptide reads, in one-letter code: ATP synthase subunit b, chloroplastic (184 aa).

The helical transmembrane segment at Leu27–Leu49 threads the bilayer.

It belongs to the ATPase B chain family. F-type ATPases have 2 components, F(1) - the catalytic core - and F(0) - the membrane proton channel. F(1) has five subunits: alpha(3), beta(3), gamma(1), delta(1), epsilon(1). F(0) has four main subunits: a(1), b(1), b'(1) and c(10-14). The alpha and beta chains form an alternating ring which encloses part of the gamma chain. F(1) is attached to F(0) by a central stalk formed by the gamma and epsilon chains, while a peripheral stalk is formed by the delta, b and b' chains.

The protein resides in the plastid. Its subcellular location is the chloroplast thylakoid membrane. F(1)F(0) ATP synthase produces ATP from ADP in the presence of a proton or sodium gradient. F-type ATPases consist of two structural domains, F(1) containing the extramembraneous catalytic core and F(0) containing the membrane proton channel, linked together by a central stalk and a peripheral stalk. During catalysis, ATP synthesis in the catalytic domain of F(1) is coupled via a rotary mechanism of the central stalk subunits to proton translocation. Functionally, component of the F(0) channel, it forms part of the peripheral stalk, linking F(1) to F(0). This chain is ATP synthase subunit b, chloroplastic, found in Lobularia maritima (Sweet alyssum).